The sequence spans 94 residues: Co-chaperonin GroES (94 aa).

The protein belongs to the GroES chaperonin family. Heptamer of 7 subunits arranged in a ring. Interacts with the chaperonin GroEL.

It is found in the cytoplasm. Functionally, together with the chaperonin GroEL, plays an essential role in assisting protein folding. The GroEL-GroES system forms a nano-cage that allows encapsulation of the non-native substrate proteins and provides a physical environment optimized to promote and accelerate protein folding. GroES binds to the apical surface of the GroEL ring, thereby capping the opening of the GroEL channel. The chain is Co-chaperonin GroES from Lactiplantibacillus plantarum (strain ATCC BAA-793 / NCIMB 8826 / WCFS1) (Lactobacillus plantarum).